A 145-amino-acid polypeptide reads, in one-letter code: MAFVRSRANASSGIGVAAECKQTFLELQRKKSHRYVIFKIDDKCKEVVVEKTGSSTESFDDFMDSLPESDCRYAIYDFDFVTEENCQKSKIFFVAWSPSVSRIRAKMLYATSKERFRRELDGVHYEIQATDPSELDIELLRERAH.

The ADF-H domain occupies 11-145 (SSGIGVAAEC…DIELLRERAH (135 aa)).

Belongs to the actin-binding proteins ADF family.

Actin-depolymerizing protein. Severs actin filaments (F-actin) and binds to actin monomers. The polypeptide is Actin-depolymerizing factor 11 (ADF11) (Oryza sativa subsp. japonica (Rice)).